The chain runs to 328 residues: Phosphate acyltransferase (328 aa).

The protein belongs to the PlsX family. As to quaternary structure, homodimer. Probably interacts with PlsY.

It is found in the cytoplasm. The enzyme catalyses a fatty acyl-[ACP] + phosphate = an acyl phosphate + holo-[ACP]. It participates in lipid metabolism; phospholipid metabolism. Catalyzes the reversible formation of acyl-phosphate (acyl-PO(4)) from acyl-[acyl-carrier-protein] (acyl-ACP). This enzyme utilizes acyl-ACP as fatty acyl donor, but not acyl-CoA. This chain is Phosphate acyltransferase, found in Staphylococcus saprophyticus subsp. saprophyticus (strain ATCC 15305 / DSM 20229 / NCIMB 8711 / NCTC 7292 / S-41).